The sequence spans 243 residues: Urease accessory protein UreF 2 (243 aa).

It belongs to the UreF family. As to quaternary structure, ureD, UreF and UreG form a complex that acts as a GTP-hydrolysis-dependent molecular chaperone, activating the urease apoprotein by helping to assemble the nickel containing metallocenter of UreC. The UreE protein probably delivers the nickel.

Its subcellular location is the cytoplasm. Functionally, required for maturation of urease via the functional incorporation of the urease nickel metallocenter. Its function is as follows. Disrupting the ure2 operon has no effect on urease activity or pathogen survival in BALB/c mice when administered orally. The sequence is that of Urease accessory protein UreF 2 from Brucella abortus (strain 2308).